A 311-amino-acid polypeptide reads, in one-letter code: Cell division protein ZipA (311 aa).

Residues 1–6 lie on the Periplasmic side of the membrane; the sequence is MENLQL. A helical membrane pass occupies residues 7-27; it reads VLFVLGAIAIIAVLVHGFWSI. Topologically, residues 28 to 311 are cytoplasmic; sequence RKQQPKSLKE…YLQRIRAQLD (284 aa). Positions 46–114 are disordered; sequence DQASVRDSQG…FALSDEPVQR (69 aa). Basic and acidic residues-rich tracts occupy residues 62-83 and 94-103; these read GEVRVRKEVPATDRQEKEDKPV and RDVEDSRHEQ.

Belongs to the ZipA family. Interacts with FtsZ via their C-terminal domains.

The protein resides in the cell inner membrane. In terms of biological role, essential cell division protein that stabilizes the FtsZ protofilaments by cross-linking them and that serves as a cytoplasmic membrane anchor for the Z ring. Also required for the recruitment to the septal ring of downstream cell division proteins. This is Cell division protein ZipA from Shewanella woodyi (strain ATCC 51908 / MS32).